Consider the following 602-residue polypeptide: Leucine-rich repeat-containing protein 40 (602 aa).

The interval 1–20 (MSRLKRIAGQDPRAGFKAAG) is disordered. S71 carries the post-translational modification Phosphoserine. LRR repeat units lie at residues 83–104 (DLTK…LRLL), 106–127 (ALTV…MREL), 129–150 (NLQK…ITNL), 152–173 (NLKC…FEQL), 175–196 (NLED…FSSL), 198–219 (SLVR…INRM), 221–242 (RLKH…LAGM), 244–265 (SLEL…PSCS), 266–286 (LLKE…EHLK), 290–311 (SILV…IILL), 313–335 (SLER…GNLH), 336–356 (LKFL…IINK), 400–421 (TLKI…VFNA), 426–447 (IITS…MVEL), 450–471 (MVSD…LCML), 473–494 (KLTF…MESL), 496–517 (RLQT…LYRI), 519–540 (TLET…KMKM), 543–564 (NLTT…LGNC), and 566–586 (NLRT…AILI).

The polypeptide is Leucine-rich repeat-containing protein 40 (LRRC40) (Macaca fascicularis (Crab-eating macaque)).